The sequence spans 414 residues: MNPTKLFLVFVAFAFAIINALPVCRQGTFDPDYNGIPDYIIVGSGPGGSRAVQQCIAKGHKCTLVERGYDYFEVPYVQTPSASFLVYSSPAVRYASTVSAKNLFNLTVNAIEANVVGGASSINGLIVVITDIDNFYRELNITGWSYEELLPRYLELMTSLNRPEHTGPLDVSDTPVSDPAYQAYRNAIRQVFPNIPERLPDMNTAFANQNGTNFPGFGPPETSTKTTYMNFAGANVPIVSYRESAYMAFVHPIRNHPNFRLMTRSRVDKVVFDVCKTRARKVIVTATNYFGSQYQCELTARYGIVLAAGAIRTPQILLQSGIGPANELSALGISVVKNLTDVGRHLDDHPTIVRQYIGPIPDNYYSANINGHAYWNYQDNASVIPNWAMQIAGVPGINFKTVLSVLQIRNHVVQ.

The signal sequence occupies residues methionine 1 to alanine 20. Residue aspartate 38–arginine 67 coordinates FAD.

This sequence belongs to the GMC oxidoreductase family. FAD is required as a cofactor.

The protein is Putative truncated GMC-type inactive oxidoreductase R832 of Acanthamoeba polyphaga (Amoeba).